Here is an 800-residue protein sequence, read N- to C-terminus: MSLVYLLGGLIVIMLIVLMTLFIKSLRRFAGYIALLAPILASGYFLAQIPNVLHGKFVEFKIPWMPAIDVNLDFRLDGLGLMFGLIISIIGVAVFFYATQYLSVNRDNLPRFFLYLLLFMFSMLGIVVSNNTILMYVFWELTSVSSFLLISYWYSNAESQLGAIQSFIITVLGGLALLTGFIMLYIITGTNTISELLTQSHSISEHALFIPMMIMLLIGAFTKSAQFPFHIWLPKAMAAPTPVSAYLHSATMVKAGIFLLFKFTPILGLSDSYIYIVTFVGLITMIFGSVTALRQYDLKGILAYSTISQLGMIMSMVGLGGGIAQHSSGPMAETYTLILFAGLFHLMNHAIFKCALFMGVGIIDHEAGTRDIRRLSGMRKFFPKMNLVMTLAALSMAGVPLLNGFLSKEMFFDSLVSAIELQQFGLTLTIIVVAIGVIASIFTFVYAVYMLKETYWGEFDEKKVPKKHIHEPWLFSLPAIILMVMIPIIFFIPNFFTEHLVLPALRNVTNLGSSVDAIAPHVSQWHGVNLPLIFSVIVIIVGLILALKVNWKAITHQVIKYASITNSYRNVYRGFERYSGQMIRGLMNNRLNHYNIITVLIFSILIAYGIFQVGLPKLHQIEVSEFGPLEVILGIMISVVGIALVFIRQRLTMVILNGIIGYSVALFFLLMRAPDLALTQLVVETITTILFIVSFSRLPNIARTTANMKKETIKIIVSFIMAGAVVTLIFIAQQGDGLESISKYYTNAYELTGGKNIVNAILGDFRALDTMFEGIVLIIAGLGIYTLLHYKDRRGQDERK.

A run of 21 helical transmembrane segments spans residues 3-23, 29-49, 78-98, 109-129, 133-153, 167-187, 202-222, 249-269, 273-293, 300-320, 337-357, 387-407, 428-448, 472-492, 527-547, 596-616, 627-647, 651-671, 676-696, 712-732, and 768-788; these read LVYL…TLFI, FAGY…LAQI, GLGL…FFYA, LPRF…IVVS, ILMY…ISYW, FIIT…LYII, SISE…GAFT, SATM…ILGL, YIYI…VTAL, GILA…VGLG, LILF…CALF, LVMT…GFLS, LTII…VYAV, PWLF…IFFI, GVNL…ILAL, IITV…VGLP, GPLE…LVFI, LTMV…FLLM, LALT…VSFS, TIKI…IFIA, and LDTM…YTLL.

This sequence belongs to the CPA3 antiporters (TC 2.A.63) subunit A family. In terms of assembly, may form a heterooligomeric complex that consists of seven subunits: mnhA2, mnhB2, mnhC2, mnhD2, mnhE2, mnhF2 and mnhG2.

It is found in the cell membrane. This chain is Putative antiporter subunit mnhA2 (mnhA2), found in Staphylococcus haemolyticus (strain JCSC1435).